Here is a 298-residue protein sequence, read N- to C-terminus: Phospholipase A1 (298 aa).

Cysteines 4 and 87 form a disulfide. N-linked (GlcNAc...) asparagine glycosylation is found at N88 and N122. S134 serves as the catalytic Nucleophile. The active-site Charge relay system is D162. Disulfide bonds link C173–C178 and C216–C225. H227 (charge relay system) is an active-site residue. Disulfide bonds link C242–C266, C243–C291, and C259–C264.

The protein belongs to the AB hydrolase superfamily. Lipase family. Expressed by the venom gland.

It localises to the secreted. It catalyses the reaction a 1,2-diacyl-sn-glycero-3-phosphocholine + H2O = a 2-acyl-sn-glycero-3-phosphocholine + a fatty acid + H(+). Functionally, catalyzes the hydrolysis of phosphatidylcholine with phospholipase A1 activity. May act as an allergen and induce hemolytic activity. This is Phospholipase A1 from Vespula squamosa (Southern yellow jacket).